Consider the following 369-residue polypeptide: sn-glycerol-3-phosphate import ATP-binding protein UgpC (369 aa).

An ABC transporter domain is found at Leu4–Ile235. Gly37–Ser44 provides a ligand contact to ATP.

This sequence belongs to the ABC transporter superfamily. sn-glycerol-3-phosphate importer (TC 3.A.1.1.3) family. As to quaternary structure, the complex is composed of two ATP-binding proteins (UgpC), two transmembrane proteins (UgpA and UgpE) and a solute-binding protein (UgpB).

Its subcellular location is the cell inner membrane. The enzyme catalyses sn-glycerol 3-phosphate(out) + ATP + H2O = sn-glycerol 3-phosphate(in) + ADP + phosphate + H(+). Part of the ABC transporter complex UgpBAEC involved in sn-glycerol-3-phosphate (G3P) import. Responsible for energy coupling to the transport system. The chain is sn-glycerol-3-phosphate import ATP-binding protein UgpC from Cupriavidus pinatubonensis (strain JMP 134 / LMG 1197) (Cupriavidus necator (strain JMP 134)).